The chain runs to 195 residues: Probable nicotinate-nucleotide adenylyltransferase (195 aa).

This sequence belongs to the NadD family.

It catalyses the reaction nicotinate beta-D-ribonucleotide + ATP + H(+) = deamido-NAD(+) + diphosphate. It participates in cofactor biosynthesis; NAD(+) biosynthesis; deamido-NAD(+) from nicotinate D-ribonucleotide: step 1/1. In terms of biological role, catalyzes the reversible adenylation of nicotinate mononucleotide (NaMN) to nicotinic acid adenine dinucleotide (NaAD). This chain is Probable nicotinate-nucleotide adenylyltransferase, found in Chlorobaculum tepidum (strain ATCC 49652 / DSM 12025 / NBRC 103806 / TLS) (Chlorobium tepidum).